A 159-amino-acid chain; its full sequence is Pathogenesis-related leaf protein 6 (159 aa).

The signal sequence occupies residues 1 to 24 (MGLFNISLLLTCLMVLAIFHSCEA). Residue glutamine 25 is modified to Pyrrolidone carboxylic acid. The 116-residue stretch at 32–147 (LAVHNDARAQ…NGWWFISCNY (116 aa)) folds into the SCP domain. Disulfide bonds link cysteine 68-cysteine 136, cysteine 109-cysteine 115, and cysteine 131-cysteine 145.

It belongs to the CRISP family.

In terms of biological role, probably involved in the defense reaction of plants against pathogens. Has antifungal activity. This Solanum lycopersicum (Tomato) protein is Pathogenesis-related leaf protein 6 (PR1B1).